The chain runs to 709 residues: Elongation factor G (709 aa).

Residues 10–295 (NQIRNIGIMA…AVVDYLPSPE (286 aa)) enclose the tr-type G domain. Residues 19-26 (AHIDAGKT), 91-95 (DTPGH), and 145-148 (NKMD) each bind GTP.

It belongs to the TRAFAC class translation factor GTPase superfamily. Classic translation factor GTPase family. EF-G/EF-2 subfamily.

It localises to the cytoplasm. Functionally, catalyzes the GTP-dependent ribosomal translocation step during translation elongation. During this step, the ribosome changes from the pre-translocational (PRE) to the post-translocational (POST) state as the newly formed A-site-bound peptidyl-tRNA and P-site-bound deacylated tRNA move to the P and E sites, respectively. Catalyzes the coordinated movement of the two tRNA molecules, the mRNA and conformational changes in the ribosome. The protein is Elongation factor G of Bifidobacterium adolescentis (strain ATCC 15703 / DSM 20083 / NCTC 11814 / E194a).